We begin with the raw amino-acid sequence, 505 residues long: Lysine--tRNA ligase, heat inducible (505 aa).

An N6-acetyllysine mark is found at lysine 114 and lysine 156. Mg(2+) contacts are provided by glutamate 415 and glutamate 422.

This sequence belongs to the class-II aminoacyl-tRNA synthetase family. In terms of assembly, homodimer. Mg(2+) serves as cofactor.

Its subcellular location is the cytoplasm. The enzyme catalyses tRNA(Lys) + L-lysine + ATP = L-lysyl-tRNA(Lys) + AMP + diphosphate. The chain is Lysine--tRNA ligase, heat inducible (lysU) from Escherichia coli O157:H7.